Reading from the N-terminus, the 152-residue chain is Transcriptional repressor NrdR (152 aa).

Residues cysteine 3–cysteine 34 fold into a zinc finger. One can recognise an ATP-cone domain in the interval isoleucine 49–threonine 139.

This sequence belongs to the NrdR family. It depends on Zn(2+) as a cofactor.

Its function is as follows. Negatively regulates transcription of bacterial ribonucleotide reductase nrd genes and operons by binding to NrdR-boxes. The polypeptide is Transcriptional repressor NrdR (Clostridium tetani (strain Massachusetts / E88)).